Here is a 403-residue protein sequence, read N- to C-terminus: Glucosyl-3-phosphoglycerate synthase (403 aa).

Asp150 contacts a divalent metal cation. 189 to 192 (GRVT) contributes to the (2R)-3-phosphoglycerate binding site. Position 273 (His273) interacts with a divalent metal cation.

Belongs to the glycosyltransferase 2 family. As to quaternary structure, homodimer. Requires Mn(2+) as cofactor. The cofactor is Co(2+). Mg(2+) is required as a cofactor. It depends on Ni(2+) as a cofactor.

The enzyme catalyses an NDP-alpha-D-glucose + (2R)-3-phosphoglycerate = (2R)-2-O-(alpha-D-glucopyranosyl)-3-phospho-glycerate + a ribonucleoside 5'-diphosphate + H(+). Functionally, involved in the biosynthesis of 6-O-methylglucose lipopolysaccarides (MGLPs). Catalyzes the transfer of a glucose (Glc) moiety from uridine diphosphate (UDP-Glc) to the position 2 of 3-phospho-D-glycerate (3-PGA) to form glucosyl-3-phosphoglycerate (GPG). GpgS is most active with UDP-glucose, followed by GDP-glucose, ADP-glucose, and to a lesser extent, TDP-glucose. 3-PGA is the only acceptor for these glucosyl donors. In Persephonella marina (strain DSM 14350 / EX-H1), this protein is Glucosyl-3-phosphoglycerate synthase.